The primary structure comprises 350 residues: Guanine nucleotide-binding protein G(t) subunit alpha-1 (350 aa).

Positions 1–21 (MGAGASAEEKHSRELEKKLKE) are disordered. A lipid anchor (N-myristoyl glycine) is attached at Gly-2. Positions 7–21 (AEEKHSRELEKKLKE) are enriched in basic and acidic residues. One can recognise a G-alpha domain in the interval 28 to 350 (RTVKLLLLGA…KENLKDCGLF (323 aa)). The interval 31-44 (KLLLLGAGESGKST) is G1 motif. 36–43 (GAGESGKS) is a binding site for GTP. Ser-43 contributes to the Mg(2+) binding site. Position 142 is a phosphotyrosine; by SRC (Tyr-142). Residues Asp-146, 171–177 (LRSRVKT), Gly-199, 265–268 (NKKD), and Ala-322 each bind GTP. The tract at residues 169 to 177 (DVLRSRVKT) is G2 motif. Arg-174 is modified (ADP-ribosylarginine; by cholera toxin). Thr-177 is a Mg(2+) binding site. A G3 motif region spans residues 192 to 201 (FRMFDVGGQR). The tract at residues 261-268 (VLFLNKKD) is G4 motif. Positions 320–325 (TCATDT) are G5 motif. Residues 340–350 (IKENLKDCGLF) are interaction with RHO. Cys-347 carries the post-translational modification ADP-ribosylcysteine; by pertussis toxin.

The protein belongs to the G-alpha family. G(i/o/t/z) subfamily. In terms of assembly, heterotrimeric G proteins are composed of 3 subunits alpha, beta and gamma. The alpha chain contains the guanine nucleotide binding site. Interacts with RHO. Interacts with RGS9 and PDE6G. Interacts (when myristoylated) with UNC119; interaction is required for localization in sensory neurons. As to expression, rod photoreceptor cells. Predominantly expressed in the retina followed by the ciliary body, iris and retinal pigment epithelium.

The protein localises to the cell projection. It is found in the cilium. The protein resides in the photoreceptor outer segment. Its subcellular location is the membrane. It localises to the photoreceptor inner segment. Functions as a signal transducer for the rod photoreceptor RHO. Required for normal RHO-mediated light perception by the retina. Guanine nucleotide-binding proteins (G proteins) function as transducers downstream of G protein-coupled receptors (GPCRs), such as the photoreceptor RHO. The alpha chain contains the guanine nucleotide binding site and alternates between an active, GTP-bound state and an inactive, GDP-bound state. Activated RHO promotes GDP release and GTP binding. Signaling is mediated via downstream effector proteins, such as cGMP-phosphodiesterase. In Homo sapiens (Human), this protein is Guanine nucleotide-binding protein G(t) subunit alpha-1 (GNAT1).